We begin with the raw amino-acid sequence, 49 residues long: Large ribosomal subunit protein bL36 (49 aa).

Belongs to the bacterial ribosomal protein bL36 family.

In Delftia acidovorans (strain DSM 14801 / SPH-1), this protein is Large ribosomal subunit protein bL36.